Reading from the N-terminus, the 94-residue chain is Pyrimidine/purine nucleoside phosphorylase 2 (94 aa).

It belongs to the nucleoside phosphorylase PpnP family.

The catalysed reaction is a purine D-ribonucleoside + phosphate = a purine nucleobase + alpha-D-ribose 1-phosphate. It carries out the reaction adenosine + phosphate = alpha-D-ribose 1-phosphate + adenine. It catalyses the reaction cytidine + phosphate = cytosine + alpha-D-ribose 1-phosphate. The enzyme catalyses guanosine + phosphate = alpha-D-ribose 1-phosphate + guanine. The catalysed reaction is inosine + phosphate = alpha-D-ribose 1-phosphate + hypoxanthine. It carries out the reaction thymidine + phosphate = 2-deoxy-alpha-D-ribose 1-phosphate + thymine. It catalyses the reaction uridine + phosphate = alpha-D-ribose 1-phosphate + uracil. The enzyme catalyses xanthosine + phosphate = alpha-D-ribose 1-phosphate + xanthine. Functionally, catalyzes the phosphorolysis of diverse nucleosides, yielding D-ribose 1-phosphate and the respective free bases. Can use uridine, adenosine, guanosine, cytidine, thymidine, inosine and xanthosine as substrates. Also catalyzes the reverse reactions. This chain is Pyrimidine/purine nucleoside phosphorylase 2, found in Psychrobacter arcticus (strain DSM 17307 / VKM B-2377 / 273-4).